Reading from the N-terminus, the 410-residue chain is MTQTHPIHVFSEIGKLKKVMLHRPGKEIENLMPDYLERLLFDDIPFLEDAQKEHDAFAQALRNEGVEVLYLENLAAESLTNQEIREQFIDEYIGEANVRGRATKKAIRELLLNIKDNKELIEKTMAGIQKSELPEIPSSEKGLTDLVESNYPFAIDPMPNLYFTRDPFATIGNGVSLNHMFSETRNRETLYGKYIFTHHPEYGGKVPMVYDREETTRIEGGDELVLSKDVLAVGISQRTDAASIEKLLVNIFKQNLGFKKVLAFEFANNRKFMHLDTVFTMVDYDKFTIHPEIEGDLRVYSVTYENQDLHIEEEKGDLAVLLAKNLGVEKVELIRCGGDNLVAAGREQWNDGSNTLTIAPGVVVVYNRNTITNAILESKGLKLIKINGSELVRGRGGPRCMSMPFEREDL.

C400 acts as the Amidino-cysteine intermediate in catalysis.

This sequence belongs to the arginine deiminase family.

The protein localises to the cytoplasm. It carries out the reaction L-arginine + H2O = L-citrulline + NH4(+). Its pathway is amino-acid degradation; L-arginine degradation via ADI pathway; carbamoyl phosphate from L-arginine: step 1/2. The chain is Arginine deiminase from Streptococcus agalactiae serotype Ia (strain ATCC 27591 / A909 / CDC SS700).